Consider the following 359-residue polypeptide: Acetoin catabolism protein X (359 aa).

The protein localises to the cell membrane. The protein operates within ketone degradation; acetoin degradation. Its function is as follows. Essential for acetoin catabolism. In Cupriavidus necator (strain ATCC 17699 / DSM 428 / KCTC 22496 / NCIMB 10442 / H16 / Stanier 337) (Ralstonia eutropha), this protein is Acetoin catabolism protein X (acoX).